The sequence spans 215 residues: Pyrrolidone-carboxylate peptidase (215 aa).

Residues Glu80, Cys143, and His167 contribute to the active site.

The protein belongs to the peptidase C15 family. Homotetramer.

The protein resides in the cytoplasm. The catalysed reaction is Release of an N-terminal pyroglutamyl group from a polypeptide, the second amino acid generally not being Pro.. Functionally, removes 5-oxoproline from various penultimate amino acid residues except L-proline. The sequence is that of Pyrrolidone-carboxylate peptidase from Bacillus thuringiensis (strain Al Hakam).